A 151-amino-acid chain; its full sequence is UPF0756 membrane protein GWCH70_2680 (151 aa).

Helical transmembrane passes span 5–25 (ILFL…SLMI), 53–73 (WGVT…EIGF), 86–106 (WIAL…VTLL), and 116–136 (LVFG…GPLI).

It belongs to the UPF0756 family.

Its subcellular location is the cell membrane. The protein is UPF0756 membrane protein GWCH70_2680 of Geobacillus sp. (strain WCH70).